A 143-amino-acid chain; its full sequence is Nucleoside diphosphate kinase (143 aa).

6 residues coordinate ATP: Lys-11, Phe-59, Arg-87, Thr-93, Arg-104, and Asn-114. His-117 (pros-phosphohistidine intermediate) is an active-site residue.

It belongs to the NDK family. In terms of assembly, homotetramer. Requires Mg(2+) as cofactor.

The protein localises to the cytoplasm. It carries out the reaction a 2'-deoxyribonucleoside 5'-diphosphate + ATP = a 2'-deoxyribonucleoside 5'-triphosphate + ADP. It catalyses the reaction a ribonucleoside 5'-diphosphate + ATP = a ribonucleoside 5'-triphosphate + ADP. Functionally, major role in the synthesis of nucleoside triphosphates other than ATP. The ATP gamma phosphate is transferred to the NDP beta phosphate via a ping-pong mechanism, using a phosphorylated active-site intermediate. This Escherichia coli O81 (strain ED1a) protein is Nucleoside diphosphate kinase.